The primary structure comprises 803 residues: MTVSFENKDFNQFINSSKFLVEYDVMSALKQEGLKQSDYVEICRRLNRGPNRNELGMFGVMWSEHCCYRNSRPLLKNLPTTGSRILVGPGENAGVVDIGFGQRLVFKIESHNHPSAVEPFQGAATGVGGILRDIFTMGARPIALLNALRFGPLDDEKNISLLEGVVAGISHYGNCVGVPTIGGEVGFDSSYSGNPLVNVMGLGLMETEEIVCSGASGIDFPVLYVGNTTGRDGMGGASFASSELSKTSIDDRPAVQVGDPFLEKGLIEACLEAFKTGYVIAAQDMGAAGLTCSCSEMASKGEVGIELNLDLVPAREKGMTAYEFLLSESQERMLFVVKPGSEEELRELFIRWGLYVEVVGKVLKEKVVRVIHKGEVVANLPASALADDTPIEEHLLINSTPEYLQEHWKWTEDLLPKTLDNGIINIKNNLFISWNNVLLDLLSMPSIASKNWIYKQYDYQVQSNTVVSPGEADAAVIRIRSQNDFLTKPKKDRGIASVVDCNDRWVYLDPLRGSMSAVAEAARNLSSVGAEPIAITNNLNFSSPDKPVGFWQLSMSCEGITKACLALSTPVTGGNVSLYNDTKLQNNTVLPIHPTPVIGMVGLIEDINKICKKSWVKAEDQIWMIGLPLENNINQDERISLSASSFLEYIHGLKTGRPPEIDLNLEKQVHAFLREVIKQGIVNSAHDLGDGGLAVAIAECCISSGYGANIILPPSQSRLDRLLFAEGGARVLVSCSTDQSEELKKYYKNISLQGSNLFSISHLGNVNNQKKLLVSQSNNTIIDVNILDLKDTYKDAIHKKITK.

H65 is an active-site residue. Positions 68 and 107 each coordinate ATP. E109 serves as a coordination point for Mg(2+). Residues S110–H113 and R132 contribute to the substrate site. The active-site Proton acceptor is the H111. A Mg(2+)-binding site is contributed by D133. Residue Q256 participates in substrate binding. D284 contacts Mg(2+). Residue E328 to Q330 participates in substrate binding. The ATP site is built by N537 and G574. N575 provides a ligand contact to Mg(2+). S577 provides a ligand contact to substrate.

Belongs to the FGAMS family. In terms of assembly, monomer. Part of the FGAM synthase complex composed of 1 PurL, 1 PurQ and 2 PurS subunits.

Its subcellular location is the cytoplasm. The enzyme catalyses N(2)-formyl-N(1)-(5-phospho-beta-D-ribosyl)glycinamide + L-glutamine + ATP + H2O = 2-formamido-N(1)-(5-O-phospho-beta-D-ribosyl)acetamidine + L-glutamate + ADP + phosphate + H(+). It functions in the pathway purine metabolism; IMP biosynthesis via de novo pathway; 5-amino-1-(5-phospho-D-ribosyl)imidazole from N(2)-formyl-N(1)-(5-phospho-D-ribosyl)glycinamide: step 1/2. Its function is as follows. Part of the phosphoribosylformylglycinamidine synthase complex involved in the purines biosynthetic pathway. Catalyzes the ATP-dependent conversion of formylglycinamide ribonucleotide (FGAR) and glutamine to yield formylglycinamidine ribonucleotide (FGAM) and glutamate. The FGAM synthase complex is composed of three subunits. PurQ produces an ammonia molecule by converting glutamine to glutamate. PurL transfers the ammonia molecule to FGAR to form FGAM in an ATP-dependent manner. PurS interacts with PurQ and PurL and is thought to assist in the transfer of the ammonia molecule from PurQ to PurL. In Prochlorococcus marinus (strain NATL1A), this protein is Phosphoribosylformylglycinamidine synthase subunit PurL.